The primary structure comprises 362 residues: MKPYLLLTPGPLTTSETVKETMMTDWCTWDEDYNLHIVESLRKELVGIATRNTEEYTSVLLQGSGTYCVEAVIGAAIGKNDKLLICSNGAYGDRMGNIAEYYHIDYELLAFDETEQVSVDYVDDYLSNNSDVTHVAFVHCETTTGILNPLKELAHVVKMPGKKLIVDAMSSFGGIPMDVSELGIDFLISSANKCIQGVPGFGFIIARRSELVRCKGVARSLSLDIYDQWETMEKGHGKWRFTSPTHVVRAFKQALTELIEEGGVEARHRRYCENHRVLVEGMRSLGFVTLLDDAIQSPIITSFLYPKTGFDFKAFYTALKSKGFVIYPGKISKADTFRIGNIGDVHPEDFARLVEVVRETEY.

Lys193 bears the N6-(pyridoxal phosphate)lysine mark.

Belongs to the class-V pyridoxal-phosphate-dependent aminotransferase family. PhnW subfamily. Homodimer. Pyridoxal 5'-phosphate is required as a cofactor.

It carries out the reaction (2-aminoethyl)phosphonate + pyruvate = phosphonoacetaldehyde + L-alanine. Functionally, involved in phosphonate degradation. The chain is 2-aminoethylphosphonate--pyruvate transaminase from Bacteroides fragilis (strain ATCC 25285 / DSM 2151 / CCUG 4856 / JCM 11019 / LMG 10263 / NCTC 9343 / Onslow / VPI 2553 / EN-2).